The following is a 724-amino-acid chain: RINT1-like protein (724 aa).

The region spanning 163–724 (RLHAVQAQSL…LERRMDIKMF (562 aa)) is the RINT1/TIP20 domain.

This sequence belongs to the RINT1 family.

In terms of biological role, during cytokinesis in male meiotic cells, required for completion of cleavage furrow ingression possibly in conjunction with Zw10. Required for maintenance of Golgi stack number and morphology. Essential for acroblast assembly. The protein is RINT1-like protein of Drosophila melanogaster (Fruit fly).